The chain runs to 450 residues: Tubulin alpha-5 chain (450 aa).

7 residues coordinate GTP: Gln11, Glu71, Gly144, Thr145, Thr179, Asn206, and Asn228. Residue Glu71 participates in Mg(2+) binding. Residue Glu254 is part of the active site.

The protein belongs to the tubulin family. As to quaternary structure, dimer of alpha and beta chains. A typical microtubule is a hollow water-filled tube with an outer diameter of 25 nm and an inner diameter of 15 nM. Alpha-beta heterodimers associate head-to-tail to form protofilaments running lengthwise along the microtubule wall with the beta-tubulin subunit facing the microtubule plus end conferring a structural polarity. Microtubules usually have 13 protofilaments but different protofilament numbers can be found in some organisms and specialized cells. Requires Mg(2+) as cofactor. Undergoes a tyrosination/detyrosination cycle, the cyclic removal and re-addition of a C-terminal tyrosine residue by the enzymes tubulin tyrosine carboxypeptidase (TTCP) and tubulin tyrosine ligase (TTL), respectively.

Its subcellular location is the cytoplasm. The protein resides in the cytoskeleton. It carries out the reaction GTP + H2O = GDP + phosphate + H(+). Its function is as follows. Tubulin is the major constituent of microtubules, a cylinder consisting of laterally associated linear protofilaments composed of alpha- and beta-tubulin heterodimers. Microtubules grow by the addition of GTP-tubulin dimers to the microtubule end, where a stabilizing cap forms. Below the cap, tubulin dimers are in GDP-bound state, owing to GTPase activity of alpha-tubulin. In Zea mays (Maize), this protein is Tubulin alpha-5 chain (TUBA5).